The sequence spans 562 residues: Catalase T (562 aa).

Active-site residues include His64 and Asn137. Tyr351 lines the heme pocket.

It belongs to the catalase family. As to quaternary structure, homotetramer. The cofactor is heme.

It is found in the cytoplasm. It carries out the reaction 2 H2O2 = O2 + 2 H2O. Functionally, occurs in almost all aerobically respiring organisms and serves to protect cells from the toxic effects of hydrogen peroxide. The chain is Catalase T (CTT1) from Saccharomyces cerevisiae (strain YJM789) (Baker's yeast).